Consider the following 692-residue polypeptide: Elongation factor G 1 (692 aa).

One can recognise a tr-type G domain in the interval 8–283 (EKTRNIGIMA…SVVEYLPSPV (276 aa)). Residues 17–24 (AHIDAGKT), 81–85 (DTPGH), and 135–138 (NKMD) contribute to the GTP site.

This sequence belongs to the TRAFAC class translation factor GTPase superfamily. Classic translation factor GTPase family. EF-G/EF-2 subfamily.

Its subcellular location is the cytoplasm. Its function is as follows. Catalyzes the GTP-dependent ribosomal translocation step during translation elongation. During this step, the ribosome changes from the pre-translocational (PRE) to the post-translocational (POST) state as the newly formed A-site-bound peptidyl-tRNA and P-site-bound deacylated tRNA move to the P and E sites, respectively. Catalyzes the coordinated movement of the two tRNA molecules, the mRNA and conformational changes in the ribosome. This Geobacter metallireducens (strain ATCC 53774 / DSM 7210 / GS-15) protein is Elongation factor G 1.